We begin with the raw amino-acid sequence, 365 residues long: 3-isopropylmalate dehydrogenase (365 aa).

80-93 (GPKWADNTGDQRPE) serves as a coordination point for NAD(+). Positions 100, 110, 138, and 223 each coordinate substrate. Mg(2+)-binding residues include Asp223, Asp247, and Asp251. 280–292 (GSAPDIAGQDVAN) is a binding site for NAD(+). The tract at residues 337–365 (NEEDASTSAFGREVATRAADSVPQNAPTP) is disordered.

It belongs to the isocitrate and isopropylmalate dehydrogenases family. LeuB type 1 subfamily. In terms of assembly, homodimer. The cofactor is Mg(2+). Requires Mn(2+) as cofactor.

Its subcellular location is the cytoplasm. The enzyme catalyses (2R,3S)-3-isopropylmalate + NAD(+) = 4-methyl-2-oxopentanoate + CO2 + NADH. It participates in amino-acid biosynthesis; L-leucine biosynthesis; L-leucine from 3-methyl-2-oxobutanoate: step 3/4. Catalyzes the oxidation of 3-carboxy-2-hydroxy-4-methylpentanoate (3-isopropylmalate) to 3-carboxy-4-methyl-2-oxopentanoate. The product decarboxylates to 4-methyl-2 oxopentanoate. This Salinibacter ruber (strain DSM 13855 / M31) protein is 3-isopropylmalate dehydrogenase.